We begin with the raw amino-acid sequence, 343 residues long: 3-hydroxy-3-methylglutaryl-CoA lyase, cytoplasmic (343 aa).

Glycine 2 carries the N-myristoyl glycine lipid modification. Residues valine 48–methionine 315 enclose the Pyruvate carboxyltransferase domain. Residue arginine 56 participates in substrate binding. A divalent metal cation-binding residues include aspartate 57, histidine 248, and histidine 250. Cysteine 281 is an active-site residue. Asparagine 290 serves as a coordination point for a divalent metal cation.

It belongs to the HMG-CoA lyase family. It depends on a divalent metal cation as a cofactor. In terms of tissue distribution, present at high level in duodenum and small intestine (at protein level).

The protein resides in the cytoplasm. The protein localises to the cytosol. It localises to the endoplasmic reticulum membrane. The enzyme catalyses (3S)-3-hydroxy-3-methylglutaryl-CoA = acetoacetate + acetyl-CoA. Its pathway is metabolic intermediate metabolism; (S)-3-hydroxy-3-methylglutaryl-CoA degradation; acetoacetate from (S)-3-hydroxy-3-methylglutaryl-CoA: step 1/1. Its function is as follows. Non-mitochondrial 3-hydroxy-3-methylglutaryl-CoA lyase that catalyzes a cation-dependent cleavage of (S)-3-hydroxy-3-methylglutaryl-CoA into acetyl-CoA and acetoacetate, a key step in ketogenesis, the products of which support energy production in nonhepatic animal tissues. The sequence is that of 3-hydroxy-3-methylglutaryl-CoA lyase, cytoplasmic (Hmgcll1) from Rattus norvegicus (Rat).